The primary structure comprises 686 residues: ATP-dependent zinc metalloprotease FtsH 2 (686 aa).

The Cytoplasmic portion of the chain corresponds to 1–11 (MKKNIKDIFKN). A helical transmembrane segment spans residues 12 to 32 (FNIFWFCFIFLLLSLLYCLIM). At 33–178 (MEISHQHDNN…LQRIPYQPYF (146 aa)) the chain is on the extracellular side. The chain crosses the membrane as a helical span at residues 179-199 (GFAPFISAVNICILIIIFYFI). The Cytoplasmic segment spans residues 200-686 (YNSIEKTSAQ…QKSEKEDCNK (487 aa)). An ATP-binding site is contributed by 272–279 (GPPGVGKT). Histidine 493 is a binding site for Zn(2+). Residue glutamate 494 is part of the active site. 2 residues coordinate Zn(2+): histidine 497 and aspartate 569.

It in the central section; belongs to the AAA ATPase family. This sequence in the C-terminal section; belongs to the peptidase M41 family. As to quaternary structure, homohexamer. Zn(2+) serves as cofactor.

The protein resides in the cell membrane. Its function is as follows. Acts as a processive, ATP-dependent zinc metallopeptidase for both cytoplasmic and membrane proteins. Plays a role in the quality control of integral membrane proteins. In Phytoplasma mali (strain AT), this protein is ATP-dependent zinc metalloprotease FtsH 2.